Reading from the N-terminus, the 437-residue chain is MDPESIMAADGTDSAPANGGLAMENVCVKENGAVSVETVDTTSESQNENSANSSTLDTIEHVKEAAEGTQVEHVDDSKCMKGEKAQRKPRHEKLSGGKNNSSVHIKKSKEGKSADAKVAASNGSVAPNVQTTNPLKSKSFNGREAQVTKQGKHDSAPAESADGEKVKPKSQKKQAHETSEDDTQSSNSPKADDGKPRKVGALPNYGFSFKCDQRAEKRKEFYVKLEEKTHAKEEEINSMQAKSKETQEAELRMLRKSLNFKATPMPSFYQEPQPPKTELKKIPPTRPKSPKLGRKKTASGADSEETQTPRLGRLSLDERASKDNPTAKGIMPTVDLKKQPVRKSLPRLPSQKTVLPDGKPAPAKAAIIPAKVRPEKKKLEKDAETVNQTSHPTEEEAQVTVSSNADVEDSHETVSPRMNEDRADKSIEVSEAVAVEH.

Disordered regions lie at residues 1 to 22 (MDPE…GGLA), 38 to 210 (TVDT…FSFK), and 254 to 437 (LRKS…AVEH). The span at 41 to 55 (TTSESQNENSANSST) shows a compositional bias: low complexity. Residues 58–86 (TIEHVKEAAEGTQVEHVDDSKCMKGEKAQ) are compositionally biased toward basic and acidic residues. Positions 121–140 (SNGSVAPNVQTTNPLKSKSF) are enriched in polar residues. Positions 151–167 (GKHDSAPAESADGEKVK) are enriched in basic and acidic residues. The residue at position 208 (Ser208) is a Phosphoserine. Positions 288 to 297 (KSPKLGRKKT) are enriched in basic residues. Positions 360–371 (PAPAKAAIIPAK) are enriched in low complexity. The segment covering 408–437 (EDSHETVSPRMNEDRADKSIEVSEAVAVEH) has biased composition (basic and acidic residues). Residue Ser415 is modified to Phosphoserine.

Belongs to the TPX2 family. Expressed in seedlings.

It localises to the cytoplasm. It is found in the cytoskeleton. In terms of biological role, microtubule-associated protein (MAP) that regulates the orientation of interphase cortical microtubules. This Arabidopsis thaliana (Mouse-ear cress) protein is Protein WVD2-like 5.